Consider the following 55-residue polypeptide: ATP synthase small subunit 6-A, mitochondrial (55 aa).

The N-terminal 11 residues, 1–11 (MRLFDPWPVFF), are a transit peptide targeting the mitochondrion. A helical membrane pass occupies residues 21–39 (FLTGFAVTGVLITKLTAGL).

This sequence belongs to the ATPase 6 subunit family.

It localises to the mitochondrion inner membrane. Its function is as follows. Mitochondrial membrane ATP synthase (F(1)F(0) ATP synthase or Complex V) produces ATP from ADP in the presence of a proton gradient across the membrane which is generated by electron transport complexes of the respiratory chain. F-type ATPases consist of two structural domains, F(1) - containing the extramembraneous catalytic core and F(0) - containing the membrane proton channel, linked together by a central stalk and a peripheral stalk. During catalysis, ATP synthesis in the catalytic domain of F(1) is coupled via a rotary mechanism of the central stalk subunits to proton translocation. Part of the complex F(0) domain. Confers tolerance to several abiotic stresses (e.g. salt, mannitol, drought, oxidative and cold stresses), probably by providing additional energy needed for cell homeostasis. The chain is ATP synthase small subunit 6-A, mitochondrial from Arabidopsis thaliana (Mouse-ear cress).